A 202-amino-acid polypeptide reads, in one-letter code: Ras-related protein Rab-18 (202 aa).

Ser-18, Gly-21, Lys-22, Ser-23, Ser-24, Asp-35, Pro-36, Thr-41, Gly-67, Lys-124, Asp-126, and Ala-153 together coordinate GTP. Residues 38–46 carry the Effector region motif; it reads QAATIGVDF. 2 S-geranylgeranyl cysteine lipidation sites follow: Cys-198 and Cys-200.

It belongs to the small GTPase superfamily. Rab family.

It localises to the cell membrane. The enzyme catalyses GTP + H2O = GDP + phosphate + H(+). The small GTPases Rab are key regulators of intracellular membrane trafficking, from the formation of transport vesicles to their fusion with membranes. Rabs cycle between an inactive GDP-bound form and an active GTP-bound form that is able to recruit to membranes different sets of downstream effectors directly responsible for vesicle formation, movement, tethering and fusion. The protein is Ras-related protein Rab-18 (RAB18A) of Lymnaea stagnalis (Great pond snail).